Here is a 188-residue protein sequence, read N- to C-terminus: Large ribosomal subunit protein bL9 (188 aa).

Positions 149–170 (RSEEEAERQARGEEIGVEKEEP) are enriched in basic and acidic residues. A disordered region spans residues 149–188 (RSEEEAERQARGEEIGVEKEEPSGFVEEALEETVEAPAEA).

This sequence belongs to the bacterial ribosomal protein bL9 family.

Binds to the 23S rRNA. The sequence is that of Large ribosomal subunit protein bL9 from Gluconacetobacter diazotrophicus (strain ATCC 49037 / DSM 5601 / CCUG 37298 / CIP 103539 / LMG 7603 / PAl5).